An 842-amino-acid polypeptide reads, in one-letter code: Protein P (842 aa).

A terminal protein domain (TP) region spans residues 1-177 (MPLSYQHFRK…FCGSPYSWEQ (177 aa)). The segment at 178–346 (ELQHGRLVFQ…YCLTHIVNLL (169 aa)) is spacer. The interval 218-274 (LKQSRLGLQPQQGSLARGKSGRSGSIRARVPPTTRRSFGVEPSGSGHIDNRASSTSS) is disordered. The polymerase/reverse transcriptase domain (RT) stretch occupies residues 347 to 690 (EDWGPCTEHG…YLHLYPVARR (344 aa)). A Reverse transcriptase domain is found at 357–600 (EHNIRIPRTP…YSLNFMGYVI (244 aa)). Positions 429, 551, and 552 each coordinate Mg(2+).

This sequence belongs to the hepadnaviridae P protein family.

The enzyme catalyses DNA(n) + a 2'-deoxyribonucleoside 5'-triphosphate = DNA(n+1) + diphosphate. It carries out the reaction Endonucleolytic cleavage to 5'-phosphomonoester.. With respect to regulation, activated by host HSP70 and HSP40 in vitro to be able to bind the epsilon loop of the pgRNA. Because deletion of the RNase H region renders the protein partly chaperone-independent, the chaperones may be needed indirectly to relieve occlusion of the RNA-binding site by this domain. Inhibited by several reverse-transcriptase inhibitors: Lamivudine, Adefovir and Entecavir. Its function is as follows. Multifunctional enzyme that converts the viral RNA genome into dsDNA in viral cytoplasmic capsids. This enzyme displays a DNA polymerase activity that can copy either DNA or RNA templates, and a ribonuclease H (RNase H) activity that cleaves the RNA strand of RNA-DNA heteroduplexes in a partially processive 3'- to 5'-endonucleasic mode. Neo-synthesized pregenomic RNA (pgRNA) are encapsidated together with the P protein, and reverse-transcribed inside the nucleocapsid. Initiation of reverse-transcription occurs first by binding the epsilon loop on the pgRNA genome, and is initiated by protein priming, thereby the 5'-end of (-)DNA is covalently linked to P protein. Partial (+)DNA is synthesized from the (-)DNA template and generates the relaxed circular DNA (RC-DNA) genome. After budding and infection, the RC-DNA migrates in the nucleus, and is converted into a plasmid-like covalently closed circular DNA (cccDNA). The activity of P protein does not seem to be necessary for cccDNA generation, and is presumably released from (+)DNA by host nuclear DNA repair machinery. The sequence is that of Protein P from Hepatitis B virus genotype C subtype adr (isolate Korea/Kim/1989) (HBV-C).